The sequence spans 364 residues: UDP-N-acetylglucosamine--N-acetylmuramyl-(pentapeptide) pyrophosphoryl-undecaprenol N-acetylglucosamine transferase (364 aa).

UDP-N-acetyl-alpha-D-glucosamine is bound by residues 10-12 (TGG), asparagine 128, arginine 170, serine 199, isoleucine 250, and glutamine 295.

It belongs to the glycosyltransferase 28 family. MurG subfamily.

It localises to the cell inner membrane. It carries out the reaction di-trans,octa-cis-undecaprenyl diphospho-N-acetyl-alpha-D-muramoyl-L-alanyl-D-glutamyl-meso-2,6-diaminopimeloyl-D-alanyl-D-alanine + UDP-N-acetyl-alpha-D-glucosamine = di-trans,octa-cis-undecaprenyl diphospho-[N-acetyl-alpha-D-glucosaminyl-(1-&gt;4)]-N-acetyl-alpha-D-muramoyl-L-alanyl-D-glutamyl-meso-2,6-diaminopimeloyl-D-alanyl-D-alanine + UDP + H(+). Its pathway is cell wall biogenesis; peptidoglycan biosynthesis. Its function is as follows. Cell wall formation. Catalyzes the transfer of a GlcNAc subunit on undecaprenyl-pyrophosphoryl-MurNAc-pentapeptide (lipid intermediate I) to form undecaprenyl-pyrophosphoryl-MurNAc-(pentapeptide)GlcNAc (lipid intermediate II). This Chlorobium limicola (strain DSM 245 / NBRC 103803 / 6330) protein is UDP-N-acetylglucosamine--N-acetylmuramyl-(pentapeptide) pyrophosphoryl-undecaprenol N-acetylglucosamine transferase.